The primary structure comprises 453 residues: F-box protein At4g27050 (453 aa).

The region spanning 3 to 51 is the F-box domain; it reads TDLISNLPDDVLGKILSLVPTKLAAATSVLSKRWRNLLPLVDSLDFDET.

As to quaternary structure, part of a SCF (ASK-cullin-F-box) protein ligase complex.

Its pathway is protein modification; protein ubiquitination. Its function is as follows. Component of SCF(ASK-cullin-F-box) E3 ubiquitin ligase complexes, which may mediate the ubiquitination and subsequent proteasomal degradation of target proteins. This Arabidopsis thaliana (Mouse-ear cress) protein is F-box protein At4g27050.